The following is a 177-amino-acid chain: ATP synthase subunit delta (177 aa).

Belongs to the ATPase delta chain family. F-type ATPases have 2 components, F(1) - the catalytic core - and F(0) - the membrane proton channel. F(1) has five subunits: alpha(3), beta(3), gamma(1), delta(1), epsilon(1). F(0) has three main subunits: a(1), b(2) and c(10-14). The alpha and beta chains form an alternating ring which encloses part of the gamma chain. F(1) is attached to F(0) by a central stalk formed by the gamma and epsilon chains, while a peripheral stalk is formed by the delta and b chains.

The protein resides in the cell inner membrane. F(1)F(0) ATP synthase produces ATP from ADP in the presence of a proton or sodium gradient. F-type ATPases consist of two structural domains, F(1) containing the extramembraneous catalytic core and F(0) containing the membrane proton channel, linked together by a central stalk and a peripheral stalk. During catalysis, ATP synthesis in the catalytic domain of F(1) is coupled via a rotary mechanism of the central stalk subunits to proton translocation. In terms of biological role, this protein is part of the stalk that links CF(0) to CF(1). It either transmits conformational changes from CF(0) to CF(1) or is implicated in proton conduction. In Flavobacterium psychrophilum (strain ATCC 49511 / DSM 21280 / CIP 103535 / JIP02/86), this protein is ATP synthase subunit delta.